The primary structure comprises 324 residues: MQTVTLSIFRFNEFEKRLWVLGQMTANKLGMHYLPKAKFWKMFGSGTGQGFTPKPNWHVWSILAVWPDEETARREVAESPIYQRWTKMADESYTVLLQPTSAWGKWDGKEPFEPVKPASDVRPIAALTRATVKFWKAERFWAREPAISHMIGRNKDVVFKIGVGEVPFVQQVTFSIWPDARSMEEFARGAGGPHGEAIKAVRAENWFKEELYARFQILGTIGKWEGKDPVGEALTARPSEAPKPAPAPAAAQPAPAAEAPKPAPAPVAEKPALAVEMPKPAEPPKPVVEAPKPASAPVASKPMPQGGKPNFKGKPGKGGRKENA.

The tract at residues 226–324 (GKDPVGEALT…PGKGGRKENA (99 aa)) is disordered. Low complexity-rich tracts occupy residues 248–278 (PAAA…VEMP) and 287–313 (VVEA…NFKG).

This sequence belongs to the CrtA family. Requires heme as cofactor.

The catalysed reaction is spheroidene + 4 reduced [2Fe-2S]-[ferredoxin] + 2 O2 + 4 H(+) = spheroiden-2-one + 4 oxidized [2Fe-2S]-[ferredoxin] + 3 H2O. It carries out the reaction spheroidene + 2 reduced [2Fe-2S]-[ferredoxin] + O2 + 2 H(+) = 2-hydroxyspheroidene + 2 oxidized [2Fe-2S]-[ferredoxin] + H2O. It catalyses the reaction 2-hydroxyspheroidene + 2 reduced [2Fe-2S]-[ferredoxin] + O2 + 2 H(+) = 2,2-dihydroxyspheroidene + 2 oxidized [2Fe-2S]-[ferredoxin] + H2O. The enzyme catalyses 2,2-dihydroxyspheroidene = spheroiden-2-one + H2O. It functions in the pathway carotenoid biosynthesis; spheroidene biosynthesis. In terms of biological role, involved in the biosynthesis of the carotenoid spheroidene. Catalyzes the introduction of one keto group at the C-2 position of spheroidene. In vitro, can use nonnative substrates and produce oxocarotenoids with a hydroxy and/or a keto group, derived from neurosporene, lycopene, 3,4-didehydrolycopene or 3,4,3',4'-tetradehydrolycopene. This chain is Spheroidene monooxygenase, found in Cereibacter sphaeroides (strain ATCC 17023 / DSM 158 / JCM 6121 / CCUG 31486 / LMG 2827 / NBRC 12203 / NCIMB 8253 / ATH 2.4.1.) (Rhodobacter sphaeroides).